A 475-amino-acid polypeptide reads, in one-letter code: Aspartyl/glutamyl-tRNA(Asn/Gln) amidotransferase subunit B (475 aa).

This sequence belongs to the GatB/GatE family. GatB subfamily. As to quaternary structure, heterotrimer of A, B and C subunits.

The catalysed reaction is L-glutamyl-tRNA(Gln) + L-glutamine + ATP + H2O = L-glutaminyl-tRNA(Gln) + L-glutamate + ADP + phosphate + H(+). The enzyme catalyses L-aspartyl-tRNA(Asn) + L-glutamine + ATP + H2O = L-asparaginyl-tRNA(Asn) + L-glutamate + ADP + phosphate + 2 H(+). In terms of biological role, allows the formation of correctly charged Asn-tRNA(Asn) or Gln-tRNA(Gln) through the transamidation of misacylated Asp-tRNA(Asn) or Glu-tRNA(Gln) in organisms which lack either or both of asparaginyl-tRNA or glutaminyl-tRNA synthetases. The reaction takes place in the presence of glutamine and ATP through an activated phospho-Asp-tRNA(Asn) or phospho-Glu-tRNA(Gln). The sequence is that of Aspartyl/glutamyl-tRNA(Asn/Gln) amidotransferase subunit B from Chlorobium limicola (strain DSM 245 / NBRC 103803 / 6330).